The primary structure comprises 677 residues: Glutamine--fructose-6-phosphate aminotransferase [isomerizing] 1 (677 aa).

Cys-2 serves as the catalytic Nucleophile. In terms of domain architecture, Glutamine amidotransferase type-2 spans 2-269 (CGIFAYLNFH…DGEVVNLKDG (268 aa)). SIS domains lie at 353–492 (HLKT…DTIS) and 524–667 (LAQL…VDQP). Substrate is bound by residues 370–371 (TS), 415–417 (SQS), Thr-420, and His-571.

As to quaternary structure, homotetramer, may also exist as homodimers. As to expression, highly expressed in flowers specifically in mature anthers, mature pollen grains and pollen tubes. Barely observed in roots, leaves and stems.

The enzyme catalyses D-fructose 6-phosphate + L-glutamine = D-glucosamine 6-phosphate + L-glutamate. Its pathway is nucleotide-sugar biosynthesis; UDP-N-acetyl-alpha-D-glucosamine biosynthesis; alpha-D-glucosamine 6-phosphate from D-fructose 6-phosphate: step 1/1. Functionally, controls the flux of glucose into the hexosamine biosynthetic pathway (HBP) leading to glucosamine (GlcN) content homeostasis. Involved in regulating the availability of precursors for N- and O-linked glycosylation of proteins. Required during pollen maturation and pollen tube formation by triggering polar deposition of pectin and callose in the pollen cell wall. Promotes tolerance to tunicamycin (Tm), an inhibitor of proteins N-glycosylation in endoplasmic reticulum (ER). The chain is Glutamine--fructose-6-phosphate aminotransferase [isomerizing] 1 from Arabidopsis thaliana (Mouse-ear cress).